The following is a 965-amino-acid chain: Fibronectin-binding protein A (965 aa).

An N-terminal signal peptide occupies residues 1–36; it reads MKNNLRYGIRKHKLGAASVFLGTMIVIGMGQDKEAA. Positions 7 to 18 match the YSIRK-G/S signaling motif motif; sequence YGIRKHKLGAAS. The interval 37–206 is disordered; sequence ASEQKTTTVE…VTSKVTVEDE (170 aa). The ligand-binding A region stretch occupies residues 37 to 514; sequence ASEQKTTTVE…SNKANGDGKY (478 aa). Over residues 39 to 55 the composition is skewed to polar residues; that stretch reads EQKTTTVEENGNSATDN. Low complexity predominate over residues 59–74; that stretch reads ETQTTTTNVNTIDETQ. Polar residues predominate over residues 75–92; sequence SYSATATEQPSNATQVTT. The segment covering 112 to 122 has biased composition (basic and acidic residues); the sequence is TVKEEVVKEEA. The segment covering 126 to 139 has biased composition (polar residues); sequence VKETTQSQDNSGDQ. Positions 179-193 are enriched in basic and acidic residues; it reads DVAEAKEASDAKVET. Positions 194-514 are fibrinogen/elastin/tropoelastin-binding; that stretch reads GTDVTSKVTV…SNKANGDGKY (321 aa). The segment at 515–837 is fibronectin-binding; sequence GPIVDSNNFE…EGQQTIEEDT (323 aa). Residues 548 to 577 form a B-1 repeat; sequence ENQDNTPLDIDYHTAIDGEGGYVDGYIETI. The tract at residues 548–607 is 2 X approximate tandem repeats; the sequence is ENQDNTPLDIDYHTAIDGEGGYVDGYIETIEETDSSAIDIDYHTAVDSEAGHVGGYTESS. The stretch at 578-607 is one B-2 repeat; it reads EETDSSAIDIDYHTAVDSEAGHVGGYTESS. Disordered regions lie at residues 598–625, 743–774, 794–903, and 916–942; these read GHVG…NSKH, LGYE…GNII, IEED…GKVV, and VAPT…NKGM. A D-1; truncated repeat occupies 748 to 770; that stretch reads GQNSGNQSFEEDTEEDKPKYEQG. Positions 748–839 are 4 X approximate tandem repeats; the sequence is GQNSGNQSFE…QQTIEEDTTP (92 aa). One copy of the D-2; truncated repeat lies at 771–785; sequence GNIIDIDFDSVPQIH. Residues 786 to 824 form a D-3 repeat; that stretch reads GFNKHNEIIEEDTNKDKPNYQFGGHNSVDFEEDTLPKVS. The segment covering 794–803 has biased composition (basic and acidic residues); sequence IEEDTNKDKP. A D-4; truncated repeat occupies 825–839; sequence GQNEGQQTIEEDTTP. Over residues 839–885 the composition is skewed to pro residues; the sequence is PPTPPTPEVPSEPGTPTPPTPEVPSEPGKPTPPTPEVPAEPGKPVPP. WR repeat units follow at residues 840–853, 854–867, 868–881, and 882–895; these read PTPP…EPGT, PTPP…EPGK, and PVPP…KPSK. Residues 840 to 895 form a 4 X tandem repeats, Pro-rich (WR) region; it reads PTPPTPEVPSEPGTPTPPTPEVPSEPGKPTPPTPEVPAEPGKPVPPAKEEPKKPSK. The short motif at 929 to 933 is the LPXTG sorting signal element; that stretch reads LPETG. The residue at position 932 (threonine 932) is a Pentaglycyl murein peptidoglycan amidated threonine. Residues 933 to 965 constitute a propeptide, removed by sortase; sequence GGEESTNKGMLFGGLFSILGLALLRRNKKNHKA.

Its subcellular location is the secreted. It localises to the cell wall. In terms of biological role, promotes bacterial attachment to multiple substrates, such as fibronectin (Fn), fibrinogen (Fg), elastin peptides and tropoelastin. This confers to S.aureus the ability to invade endothelial cells. Promotes adherence to and aggregation of activated platelets. The protein is Fibronectin-binding protein A (fnbA) of Staphylococcus aureus (strain MRSA252).